Consider the following 447-residue polypeptide: Ribosomal protein uS12 methylthiotransferase RimO (447 aa).

Positions 15-125 (PRVGFVSLGC…VMQAIHRHLP (111 aa)) constitute an MTTase N-terminal domain. [4Fe-4S] cluster contacts are provided by cysteine 24, cysteine 60, cysteine 89, cysteine 156, cysteine 160, and cysteine 163. Residues 142 to 379 (LTPKHYAYLK…MQWQEEISKK (238 aa)) form the Radical SAM core domain. One can recognise a TRAM domain in the interval 379 to 447 (KRLAGKKGRI…GIHDLWAKKI (69 aa)).

This sequence belongs to the methylthiotransferase family. RimO subfamily. Requires [4Fe-4S] cluster as cofactor.

The protein resides in the cytoplasm. It carries out the reaction L-aspartate(89)-[ribosomal protein uS12]-hydrogen + (sulfur carrier)-SH + AH2 + 2 S-adenosyl-L-methionine = 3-methylsulfanyl-L-aspartate(89)-[ribosomal protein uS12]-hydrogen + (sulfur carrier)-H + 5'-deoxyadenosine + L-methionine + A + S-adenosyl-L-homocysteine + 2 H(+). Functionally, catalyzes the methylthiolation of an aspartic acid residue of ribosomal protein uS12. In Nitrosomonas europaea (strain ATCC 19718 / CIP 103999 / KCTC 2705 / NBRC 14298), this protein is Ribosomal protein uS12 methylthiotransferase RimO.